A 229-amino-acid chain; its full sequence is Thymidylate kinase (229 aa).

Residue 9-16 (GPEGSGKS) coordinates ATP.

Belongs to the thymidylate kinase family.

The enzyme catalyses dTMP + ATP = dTDP + ADP. Phosphorylation of dTMP to form dTDP in both de novo and salvage pathways of dTTP synthesis. This Roseiflexus castenholzii (strain DSM 13941 / HLO8) protein is Thymidylate kinase.